The sequence spans 494 residues: Rhamnulokinase (494 aa).

18–22 (ASSGR) is a binding site for ATP. Residues glycine 87 and 242 to 244 (HDT) each bind substrate. The active-site Proton acceptor is aspartate 243. An ATP-binding site is contributed by threonine 265. Asparagine 302 lines the substrate pocket. Residue glutamine 310 coordinates ATP. A disulfide bridge links cysteine 360 with cysteine 377. Glycine 411 contacts ATP.

Belongs to the rhamnulokinase family. It depends on Mg(2+) as a cofactor.

It carries out the reaction L-rhamnulose + ATP = L-rhamnulose 1-phosphate + ADP + H(+). It participates in carbohydrate degradation; L-rhamnose degradation; glycerone phosphate from L-rhamnose: step 2/3. Its function is as follows. Involved in the catabolism of L-rhamnose (6-deoxy-L-mannose). Catalyzes the transfer of the gamma-phosphate group from ATP to the 1-hydroxyl group of L-rhamnulose to yield L-rhamnulose 1-phosphate. This Enterococcus faecalis (strain ATCC 700802 / V583) protein is Rhamnulokinase.